The sequence spans 266 residues: Mitochondrial import inner membrane translocase subunit Tim29 (266 aa).

A mitochondrion-targeting transit peptide spans 1 to 37 (MVTAALKRFWSGGHGEAGGEAGGATTVAVKPGLWTRL). The Mitochondrial matrix segment spans residues 38–65 (STWAGALLRDYAEACGDAAAAARARPGR). A helical transmembrane segment spans residues 66–83 (AALYVGLLGGAAACCALA). The Mitochondrial intermembrane portion of the chain corresponds to 84 to 266 (PSEAAFEEAL…DSLVQSDVSR (183 aa)).

Component of the TIM22 complex, which core is composed of TIMM22, associated with TIMM10 (TIMM10A and/or TIMM10B), TIMM9, AGK and TIMM29. Interacts with TIMM10B; the interaction is direct. Interacts with TOMM40; linking the TIM22 complex to the TOM complex. Interacts with TIMM22 (when oxidized); the interaction is direct.

Its subcellular location is the mitochondrion inner membrane. Functionally, component of the TIM22 complex, a complex that mediates the import and insertion of multi-pass transmembrane proteins into the mitochondrial inner membrane. The TIM22 complex forms a twin-pore translocase that uses the membrane potential as the external driving force. Required for the stability of the TIM22 complex and functions in the assembly of the TIMM22 protein into the TIM22 complex. May facilitate cooperation between TIM22 and TOM complexes by interacting with TOMM40. This is Mitochondrial import inner membrane translocase subunit Tim29 (Timm29) from Mus musculus (Mouse).